Consider the following 406-residue polypeptide: Peptidase T (406 aa).

Residue H77 participates in Zn(2+) binding. D79 is a catalytic residue. D139 contributes to the Zn(2+) binding site. E173 serves as the catalytic Proton acceptor. Zn(2+)-binding residues include E174, D196, and H377.

This sequence belongs to the peptidase M20B family. Zn(2+) serves as cofactor.

The protein resides in the cytoplasm. The catalysed reaction is Release of the N-terminal residue from a tripeptide.. In terms of biological role, cleaves the N-terminal amino acid of tripeptides. In Parabacteroides distasonis (strain ATCC 8503 / DSM 20701 / CIP 104284 / JCM 5825 / NCTC 11152), this protein is Peptidase T.